The sequence spans 517 residues: Crotonobetaine/carnitine--CoA ligase (517 aa).

It belongs to the ATP-dependent AMP-binding enzyme family.

The catalysed reaction is 4-(trimethylamino)butanoate + ATP + CoA = 4-(trimethylamino)butanoyl-CoA + AMP + diphosphate. It catalyses the reaction crotonobetaine + ATP + CoA = crotonobetainyl-CoA + AMP + diphosphate. The enzyme catalyses (R)-carnitine + ATP + CoA = (R)-carnitinyl-CoA + AMP + diphosphate. The protein operates within amine and polyamine metabolism; carnitine metabolism. Functionally, catalyzes the transfer of CoA to carnitine, generating the initial carnitinyl-CoA needed for the CaiB reaction cycle. Also has activity toward crotonobetaine and gamma-butyrobetaine. This chain is Crotonobetaine/carnitine--CoA ligase, found in Escherichia coli (strain K12 / MC4100 / BW2952).